Consider the following 229-residue polypeptide: Adenylate kinase (229 aa).

The propeptide occupies 1–9 (MLSTLAKRF). 25–30 (GVGKGT) is an ATP binding site. An NMP region spans residues 45 to 74 (STGDALRAEIRGQTPLGKRVKGIIESGGLV). Residues threonine 46, arginine 51, 72–74 (GLV), 100–103 (GIPR), and glutamine 107 each bind AMP. The LID stretch occupies residues 141-178 (GRLFHPGSGRVYHKVTNPPKKPMTDDITGEPLIIRKDD). Arginine 142 contacts ATP. AMP is bound by residues arginine 175 and arginine 186. Glycine 214 is a binding site for ATP.

Belongs to the adenylate kinase family.

The protein localises to the hydrogenosome. The enzyme catalyses AMP + ATP = 2 ADP. In terms of biological role, catalyzes the reversible transfer of the terminal phosphate group between ATP and AMP. Plays an important role in cellular energy homeostasis and in adenine nucleotide metabolism. This chain is Adenylate kinase, found in Trichomonas vaginalis.